Consider the following 326-residue polypeptide: MATH domain and coiled-coil domain-containing protein At3g58370 (326 aa).

In terms of domain architecture, MATH spans 7–133; it reads DNKFTWVIKN…NGEVKIVVEI (127 aa). Residues 259–312 are a coiled coil; the sequence is LRLDWLEKKLAEVKAKKKKVETGKARLQRAEEELQKLNQKCLELKAFLEKENAD.

This chain is MATH domain and coiled-coil domain-containing protein At3g58370, found in Arabidopsis thaliana (Mouse-ear cress).